The chain runs to 471 residues: Argininosuccinate lyase (471 aa).

This sequence belongs to the lyase 1 family. Argininosuccinate lyase subfamily.

Its subcellular location is the cytoplasm. The enzyme catalyses 2-(N(omega)-L-arginino)succinate = fumarate + L-arginine. Its pathway is amino-acid biosynthesis; L-arginine biosynthesis; L-arginine from L-ornithine and carbamoyl phosphate: step 3/3. The polypeptide is Argininosuccinate lyase (Renibacterium salmoninarum (strain ATCC 33209 / DSM 20767 / JCM 11484 / NBRC 15589 / NCIMB 2235)).